We begin with the raw amino-acid sequence, 444 residues long: Transcriptional regulatory protein GlrR (444 aa).

Residues 7–121 form the Response regulatory domain; that stretch reads HLLLVDDDPG…ALYQAIDDAL (115 aa). Asp-56 is modified (4-aspartylphosphate). Residues 136-366 form the Sigma-54 factor interaction domain; sequence IVTRSPLMLR…VNVIEQCVAL (231 aa). Residues 164 to 171 and 227 to 236 contribute to the ATP site; these read GQSGTGKE and AEGGTLFLDE. The H-T-H motif DNA-binding region spans 414 to 433; sequence VTHAARMAGRNRTEFYKLLS.

Phosphorylated by GlrK.

It localises to the cytoplasm. Member of the two-component regulatory system GlrR/GlrK that up-regulates transcription of the glmY sRNA when cells enter the stationary growth phase. Regulates glmY transcription by binding to three conserved sites in the purL-glmY intergenic region. This Escherichia coli (strain K12) protein is Transcriptional regulatory protein GlrR (glrR).